Here is a 717-residue protein sequence, read N- to C-terminus: Mitochondrial potassium channel ATP-binding subunit (717 aa).

The transit peptide at 1–25 (MLVHLFRFGIRGGPVPGWSLQSLRF) directs the protein to the mitochondrion. 4 helical membrane passes run 127 to 147 (LLALGAAIVLALGAALVNVQI), 178 to 198 (VQLLLLYGVQGLLTFGYLVLL), 278 to 298 (LMLAVVTPALMGVGTLMGSGL), and 365 to 385 (NIAFNCMVLGTLFIGGSLVAG). Residues 132–419 (AAIVLALGAA…LSVLFGQVVR (288 aa)) enclose the ABC transmembrane type-1 domain. The region spanning 454–691 (ITFQNVTFSY…GGLYSELIRR (238 aa)) is the ABC transporter domain. An ATP-binding site is contributed by 489-496 (GQSGGGKT). The tract at residues 695 to 717 (DASLTSTPPAEKPEDPKSCQSKA) is disordered.

Belongs to the ABC transporter superfamily. ABCB family. Multidrug resistance exporter (TC 3.A.1.201) subfamily. The mitochondrial potassium channel (mitoK(ATP)) is composed of 4 subunits of CCDC51/MITOK and 4 subunits of ABCB8/MITOSUR. Interacts with PAAT. Interacts with NRP1; NRP1 regulates ABCB8/MITOSUR protein levels in mitochondria.

Its subcellular location is the mitochondrion inner membrane. Its activity is regulated as follows. Channel activity inhibited by ATP via ABCB8/MITOSUR subunit. ATP-binding subunit of the mitochondrial ATP-gated potassium channel (mitoK(ATP)). Together with pore-forming subunit CCDC51/MITOK of the mitoK(ATP) channel, mediates ATP-dependent potassium currents across the mitochondrial inner membrane. An increase in ATP intracellular levels closes the channel, inhibiting K(+) transport, whereas a decrease in ATP levels enhances K(+) uptake in the mitochondrial matrix. Plays a role in mitochondrial iron transport. Required for maintenance of normal cardiac function, possibly by influencing mitochondrial iron export and regulating the maturation of cytosolic iron sulfur cluster-containing enzymes. In Mus musculus (Mouse), this protein is Mitochondrial potassium channel ATP-binding subunit.